A 142-amino-acid chain; its full sequence is UPF0310 protein PYRAB08750 (142 aa).

It belongs to the UPF0310 family.

This is UPF0310 protein PYRAB08750 from Pyrococcus abyssi (strain GE5 / Orsay).